Here is a 358-residue protein sequence, read N- to C-terminus: Testis-specific serine/threonine-protein kinase 2 (358 aa).

Residues Tyr12–Leu272 form the Protein kinase domain. ATP-binding positions include Leu18–Val26 and Lys41. Asp136 acts as the Proton acceptor in catalysis. 2 stretches are compositionally biased toward basic and acidic residues: residues Asp296 to Leu315 and Asn329 to Thr358. The interval Asp296–Thr358 is disordered.

This sequence belongs to the protein kinase superfamily. CAMK Ser/Thr protein kinase family. Interacts with TSSK1B. Interacts with HSP90; this interaction stabilizes TSSK2. Mg(2+) is required as a cofactor. Post-translationally, autophosphorylated. Ubiquitinated; HSP90 activity negatively regulates ubiquitination and degradation. In terms of tissue distribution, testis-specific. Expressed only in the spermatids postmeiotically at the final stages of cytodifferentiation in the seminiferous tubules (at protein level). Not detected in released sperms in the lumen of the seminiferous tubules. Also present in the epididymal sperm (at protein level).

It is found in the cytoplasm. It localises to the cytoskeleton. Its subcellular location is the microtubule organizing center. The protein resides in the centrosome. The protein localises to the centriole. It is found in the cytoplasmic vesicle. It localises to the secretory vesicle. Its subcellular location is the acrosome. It catalyses the reaction L-seryl-[protein] + ATP = O-phospho-L-seryl-[protein] + ADP + H(+). The enzyme catalyses L-threonyl-[protein] + ATP = O-phospho-L-threonyl-[protein] + ADP + H(+). Its activity is regulated as follows. Activated by phosphorylation on Thr-174, potentially by autophosphorylation. Its function is as follows. Testis-specific serine/threonine-protein kinase required during spermatid development. Phosphorylates 'Ser-281' of TSKS and SPAG16. Involved in the late stages of spermatogenesis, during the reconstruction of the cytoplasm. During spermatogenesis, required for the transformation of a ring-shaped structure around the base of the flagellum originating from the chromatoid body. The sequence is that of Testis-specific serine/threonine-protein kinase 2 (Tssk2) from Mus musculus (Mouse).